Here is a 344-residue protein sequence, read N- to C-terminus: Lysophosphatidic acid receptor 6 (344 aa).

Topologically, residues 1–25 (MVSSNGSQCPYDDSFKYTLYGCMFS) are extracellular. An N-linked (GlcNAc...) asparagine glycan is attached at Asn-5. Residues 26–46 (MVFVLGLISNCVAIYIFICAL) traverse the membrane as a helical segment. The Cytoplasmic portion of the chain corresponds to 47–56 (KVRNETTTYM). The helical transmembrane segment at 57–77 (INLAMSDLLFVFTLPFRIFYF) threads the bilayer. Topologically, residues 78 to 90 (ATRNWPFGDLLCK) are extracellular. A disulfide bond links Cys-89 and Cys-168. The helical transmembrane segment at 91–111 (ISVMLFYTNMYGSILFLTCIS) threads the bilayer. Residues 112 to 134 (VDRFLAIVYPFKSKTLRTKRNAK) are Cytoplasmic-facing. Residues 135–155 (IVCIAVWFTVMGGSAPAVFFQ) traverse the membrane as a helical segment. Over 156 to 183 (STHSQGNNTSEACFENFPAATWKTYLSR) the chain is Extracellular. N-linked (GlcNAc...) asparagine glycosylation is found at Asn-162 and Asn-163. A helical transmembrane segment spans residues 184–204 (IVIFIEIVGFFIPLILNVTCS). Over 205–230 (SMVLRTLNKPVTLSRSKMNKTKVLKM) the chain is Cytoplasmic. Residues 231–251 (IFVHLVIFCFCFVPYNINLIL) traverse the membrane as a helical segment. Residues 252-272 (YSLMRTQTFVNCSVVAAVRTM) lie on the Extracellular side of the membrane. N-linked (GlcNAc...) asparagine glycosylation occurs at Asn-262. A helical transmembrane segment spans residues 273–293 (YPITLCIAVSNCCFDPIVYYF). Cys-284 carries S-palmitoyl cysteine lipidation. At 294–344 (TSDTIQNSIKMKNWSVRRSDSRFSEVQGTENFIQHNLQTLKNKIFDNESAI) the chain is on the cytoplasmic side.

Belongs to the G-protein coupled receptor 1 family. Ubiquitously expressed. Detected in the hair follicles and skin (at protein level).

The protein localises to the cell membrane. In terms of biological role, binds to oleoyl-L-alpha-lysophosphatidic acid (LPA). Intracellular cAMP is involved in the receptor activation. Important for the maintenance of hair growth and texture. This is Lysophosphatidic acid receptor 6 (Lpar6) from Mus musculus (Mouse).